A 308-amino-acid chain; its full sequence is Transaldolase (308 aa).

The Schiff-base intermediate with substrate role is filled by Lys-125.

This sequence belongs to the transaldolase family. Type 1 subfamily. As to quaternary structure, homodimer.

It is found in the cytoplasm. It carries out the reaction D-sedoheptulose 7-phosphate + D-glyceraldehyde 3-phosphate = D-erythrose 4-phosphate + beta-D-fructose 6-phosphate. The protein operates within carbohydrate degradation; pentose phosphate pathway; D-glyceraldehyde 3-phosphate and beta-D-fructose 6-phosphate from D-ribose 5-phosphate and D-xylulose 5-phosphate (non-oxidative stage): step 2/3. In terms of biological role, transaldolase is important for the balance of metabolites in the pentose-phosphate pathway. This Pseudomonas putida (strain W619) protein is Transaldolase.